Consider the following 495-residue polypeptide: Tripartite motif-containing protein 5 (495 aa).

Ala2 bears the N-acetylalanine mark. The segment at 15–60 (CPICLELLTEPLSLHCGHSFCQACITANHKKSMLYKEGERSCPVCR) adopts an RING-type zinc-finger fold. At Ser87 the chain carries Phosphoserine. A B box-type zinc finger spans residues 92–133 (QKVDHCARHGEKLLLFCQEDSKVICWLCERSQEHRGHHTFLM). Zn(2+) is bound by residues Cys97, His100, Cys119, and His125. Residues 137–223 (AQEYHVKLQT…KSLTKSETKM (87 aa)) adopt a coiled-coil conformation. The interval 187 to 200 (FEQLREILDREESN) is required for interaction with GABARAP and for autophagy. The B30.2/SPRY domain maps to 283 to 495 (LKGMLDMFRE…VPMTLCSPSS (213 aa)).

It belongs to the TRIM/RBCC family. Can form homodimers and homotrimers. In addition to lower-order dimerization, also exhibits a higher-order multimerization and both low- and high-order multimerizations are essential for its restriction activity. Interacts with BTBD1 and BTBD2. Interacts with PSMC4, PSMC5, PSMD7 and HSPA8/HSC70. Interacts (via B30.2/SPRY domain) with HSPA1A/B. Interacts with PSMC2, MAP3K7/TAK1, TAB2 and TAB3. Interacts with SQSTM1. Interacts with TRIM6 and TRIM34. Interacts with ULK1 (phosphorylated form), GABARAP, GABARAPL1, GABARAPL2, MAP1LC3A, MAP1LC3C and BECN1. Post-translationally, degraded in a proteasome-independent fashion in the absence of viral infection but in a proteasome-dependent fashion following exposure to restriction sensitive virus. Autoubiquitinated in a RING finger- and UBE2D2-dependent manner. Monoubiquitinated by TRIM21. Deubiquitinated by Yersinia YopJ. Ubiquitination may not lead to proteasomal degradation.

Its subcellular location is the cytoplasm. It localises to the nucleus. The catalysed reaction is S-ubiquitinyl-[E2 ubiquitin-conjugating enzyme]-L-cysteine + [acceptor protein]-L-lysine = [E2 ubiquitin-conjugating enzyme]-L-cysteine + N(6)-ubiquitinyl-[acceptor protein]-L-lysine.. It functions in the pathway protein modification; protein ubiquitination. Functionally, capsid-specific restriction factor that prevents infection from non-host-adapted retroviruses. Blocks viral replication early in the life cycle, after viral entry but before reverse transcription. In addition to acting as a capsid-specific restriction factor, also acts as a pattern recognition receptor that activates innate immune signaling in response to the retroviral capsid lattice. Binding to the viral capsid triggers its E3 ubiquitin ligase activity, and in concert with the heterodimeric ubiquitin conjugating enzyme complex UBE2V1-UBE2N (also known as UBC13-UEV1A complex) generates 'Lys-63'-linked polyubiquitin chains, which in turn are catalysts in the autophosphorylation of the MAP3K7/TAK1 complex (includes TAK1, TAB2, and TAB3). Activation of the MAP3K7/TAK1 complex by autophosphorylation results in the induction and expression of NF-kappa-B and MAPK-responsive inflammatory genes, thereby leading to an innate immune response in the infected cell. Plays a role in regulating autophagy through activation of autophagy regulator BECN1 by causing its dissociation from its inhibitors BCL2 and TAB2. The protein is Tripartite motif-containing protein 5 (TRIM5) of Macaca nemestrina (Pig-tailed macaque).